Here is a 223-residue protein sequence, read N- to C-terminus: Ras-related protein Rab-21 (223 aa).

Ala-2 is subject to N-acetylalanine. GTP-binding residues include Gly-26, Gly-29, Lys-30, Thr-31, Ser-32, Asn-43, Asp-44, His-46, Thr-48, and Thr-49. Thr-31 lines the Mg(2+) pocket. Residues 41–54 (KFNDKHITTLQASF) carry the Switch 1 motif. 2 residues coordinate Mg(2+): Thr-49 and Asp-72. Residues 74–92 (AGQERFHALGPIYYRDSNG) carry the Switch 2 motif. Residues Gly-75, Asn-130, Lys-131, Asp-133, Ala-161, and Lys-162 each contribute to the GTP site. Residues Cys-219 and Cys-220 are each lipidated (S-geranylgeranyl cysteine). At Cys-220 the chain carries Cysteine methyl ester. Residues 221–223 (SSG) constitute a propeptide, removed in mature form.

Belongs to the small GTPase superfamily. Rab family. Interacts with the cytoplasmic tail of integrins ITGA1, ITGA2, ITGA5, ITGA6, ITGA11 and ITGB1; this interaction is dependent upon its GDP/GTP cycle. Interacts with ANKRD27. Interacts (active GTP-bound form) with TMED10; the interaction is indirect and regulates TMED10 abundance and localization at the Golgi. It depends on Mg(2+) as a cofactor.

The protein resides in the endoplasmic reticulum membrane. Its subcellular location is the golgi apparatus. It is found in the trans-Golgi network. It localises to the golgi apparatus membrane. The protein localises to the early endosome membrane. The protein resides in the cytoplasmic vesicle membrane. Its subcellular location is the cleavage furrow. It is found in the cell projection. It localises to the neuron projection. It carries out the reaction GTP + H2O = GDP + phosphate + H(+). With respect to regulation, regulated by guanine nucleotide exchange factors (GEFs) including ANKRD27 and RABGEF1, which promote the exchange of bound GDP for free GTP. Regulated by GTPase activating proteins (GAPs) which increase the GTP hydrolysis activity. Inhibited by GDP dissociation inhibitors (GDIs). Functionally, the small GTPases Rab are key regulators of intracellular membrane trafficking, from the formation of transport vesicles to their fusion with membranes. Rabs cycle between an inactive GDP-bound form and an active GTP-bound form that is able to recruit to membranes different sets of downstream effectors directly responsible for vesicle formation, movement, tethering and fusion. RAB21 is involved in membrane trafficking control. Regulates integrin internalization and recycling, but does not influence the traffic of endosomally translocated receptors in general. As a result, may regulate cell adhesion and migration. During the mitosis of adherent cells, controls the endosomal trafficking of integrins which is required for the successful completion of cytokinesis. Involved in neurite growth. Modulates protein levels of the cargo receptors TMED2 and TMED10, and required for appropriate Golgi localization of TMED10. This chain is Ras-related protein Rab-21 (RAB21), found in Canis lupus familiaris (Dog).